The following is a 671-amino-acid chain: NADH-quinone oxidoreductase subunit G (671 aa).

A 2Fe-2S ferredoxin-type domain is found at 1–78; the sequence is MIKLNVDGSE…GMVIHTDTPM (78 aa). 4 residues coordinate [2Fe-2S] cluster: Cys34, Cys45, Cys48, and Cys62. A 4Fe-4S His(Cys)3-ligated-type domain is found at 78–117; that stretch reads MVKKAREGVMEFLLINHPLDCPICDQGGECNLQDQAFRYG. His94, Cys98, Cys101, Cys107, Cys146, Cys149, Cys152, and Cys196 together coordinate [4Fe-4S] cluster. Positions 215–271 constitute a 4Fe-4S Mo/W bis-MGD-type domain; the sequence is LKHTASIGVHDAEGSNIRIDSRGDEVMRILPRVNEEINEEWLSDKNRFSYDGLKYQR.

This sequence belongs to the complex I 75 kDa subunit family. The cofactor is [2Fe-2S] cluster. [4Fe-4S] cluster serves as cofactor.

The catalysed reaction is a quinone + NADH + 5 H(+)(in) = a quinol + NAD(+) + 4 H(+)(out). NDH-1 shuttles electrons from NADH, via FMN and iron-sulfur (Fe-S) centers, to quinones in the respiratory chain. Couples the redox reaction to proton translocation (for every two electrons transferred, four hydrogen ions are translocated across the cytoplasmic membrane), and thus conserves the redox energy in a proton gradient. The chain is NADH-quinone oxidoreductase subunit G (nuoG) from Rickettsia conorii (strain ATCC VR-613 / Malish 7).